The sequence spans 349 residues: Glycerol-3-phosphate dehydrogenase [NAD(+)], cytoplasmic (349 aa).

Position 10-15 (10-15) interacts with NAD(+); that stretch reads GSGNWG. Lys-120 is a binding site for substrate. Ala-153 contributes to the NAD(+) binding site. Catalysis depends on Lys-204, which acts as the Proton acceptor. An NAD(+)-binding site is contributed by Arg-269. Substrate is bound at residue 269–270; sequence RN. Lys-289 carries the N6-succinyllysine modification. Residues Lys-296 and Gln-298 each coordinate NAD(+). Tyr-326 is modified (phosphotyrosine).

The protein belongs to the NAD-dependent glycerol-3-phosphate dehydrogenase family. As to quaternary structure, homodimer.

The protein resides in the cytoplasm. It carries out the reaction sn-glycerol 3-phosphate + NAD(+) = dihydroxyacetone phosphate + NADH + H(+). In terms of biological role, has glycerol-3-phosphate dehydrogenase activity. The protein is Glycerol-3-phosphate dehydrogenase [NAD(+)], cytoplasmic (GPD1) of Bos taurus (Bovine).